Consider the following 507-residue polypeptide: Nuclear poly(A) polymerase 3 (507 aa).

ATP-binding positions include 79–81 (YGS), 91–94 (SDID), aspartate 147, lysine 208, tyrosine 217, and 226–227 (GV). Mg(2+)-binding residues include aspartate 92, aspartate 94, and aspartate 147.

The protein belongs to the poly(A) polymerase family. In terms of assembly, monomer. Forms a complex with cleavage and polyadenylation specificity factor (CPSF) subunits FIPS5 and CPSF30. Mg(2+) serves as cofactor. Requires Mn(2+) as cofactor. Expressed in leaves (mostly in petioles and tips), cotyledon, roots (tips, vascular tissue of the radicle, and throughout the root tissue excluding the elongation zone), stems, and flowers (restricted to the stigma and the pollen in mature anthers). Active in the primary and secondary root systems.

The protein resides in the nucleus. It carries out the reaction RNA(n) + ATP = RNA(n)-3'-adenine ribonucleotide + diphosphate. Functionally, essential protein. Polymerase that creates the 3'-poly(A) tail of mRNA's. Also required for the endoribonucleolytic cleavage reaction at some polyadenylation sites. May acquire specificity through interaction with a cleavage and polyadenylation specificity factor (CPSF) at its C-terminus. The sequence is that of Nuclear poly(A) polymerase 3 from Arabidopsis thaliana (Mouse-ear cress).